We begin with the raw amino-acid sequence, 378 residues long: Alkanesulfonate monooxygenase (378 aa).

Belongs to the SsuD family.

It catalyses the reaction an alkanesulfonate + FMNH2 + O2 = an aldehyde + FMN + sulfite + H2O + 2 H(+). Catalyzes the desulfonation of aliphatic sulfonates. This chain is Alkanesulfonate monooxygenase, found in Bacillus velezensis (strain DSM 23117 / BGSC 10A6 / LMG 26770 / FZB42) (Bacillus amyloliquefaciens subsp. plantarum).